The sequence spans 126 residues: Small ribosomal subunit protein uS13 (126 aa).

The interval 93-126 is disordered; the sequence is RRGLPVRGQRTKTNARTRKGPKRTVAGKKKAGRK.

It belongs to the universal ribosomal protein uS13 family. In terms of assembly, part of the 30S ribosomal subunit. Forms a loose heterodimer with protein S19. Forms two bridges to the 50S subunit in the 70S ribosome.

Functionally, located at the top of the head of the 30S subunit, it contacts several helices of the 16S rRNA. In the 70S ribosome it contacts the 23S rRNA (bridge B1a) and protein L5 of the 50S subunit (bridge B1b), connecting the 2 subunits; these bridges are implicated in subunit movement. Contacts the tRNAs in the A and P-sites. In Beutenbergia cavernae (strain ATCC BAA-8 / DSM 12333 / CCUG 43141 / JCM 11478 / NBRC 16432 / NCIMB 13614 / HKI 0122), this protein is Small ribosomal subunit protein uS13.